Here is a 391-residue protein sequence, read N- to C-terminus: Ferrochelatase (391 aa).

Fe cation is bound by residues His196 and Glu281.

This sequence belongs to the ferrochelatase family.

The protein localises to the cytoplasm. The enzyme catalyses heme b + 2 H(+) = protoporphyrin IX + Fe(2+). It functions in the pathway porphyrin-containing compound metabolism; protoheme biosynthesis; protoheme from protoporphyrin-IX: step 1/1. Functionally, catalyzes the ferrous insertion into protoporphyrin IX. The polypeptide is Ferrochelatase (Prochlorococcus marinus (strain MIT 9211)).